Reading from the N-terminus, the 491-residue chain is Nicotinamide phosphoribosyltransferase (491 aa).

The residue at position 1 (M1) is an N-acetylmethionine. Y188 carries the post-translational modification Phosphotyrosine. R196 is a binding site for diphosphate. D219 is a binding site for beta-nicotinamide D-ribonucleotide. Residues H247 and R311 each coordinate diphosphate. Beta-nicotinamide D-ribonucleotide contacts are provided by residues 311 to 313 (RPD), 353 to 354 (GD), G384, and R392. S472 carries the phosphoserine modification.

The protein belongs to the NAPRTase family. In terms of assembly, homodimer. As to expression, ubiquitously expressed in lymphoid and non-lymphoid tissues.

The protein localises to the nucleus. Its subcellular location is the cytoplasm. The protein resides in the secreted. It carries out the reaction beta-nicotinamide D-ribonucleotide + diphosphate = 5-phospho-alpha-D-ribose 1-diphosphate + nicotinamide + H(+). It functions in the pathway cofactor biosynthesis; NAD(+) biosynthesis; nicotinamide D-ribonucleotide from 5-phospho-alpha-D-ribose 1-diphosphate and nicotinamide: step 1/1. The secreted form behaves both as a cytokine with immunomodulating properties and an adipokine with anti-diabetic properties, it has no enzymatic activity, partly because of lack of activation by ATP, which has a low level in extracellular space and plasma. Catalyzes the condensation of nicotinamide with 5-phosphoribosyl-1-pyrophosphate to yield nicotinamide mononucleotide, an intermediate in the biosynthesis of NAD. It is the rate limiting component in the mammalian NAD biosynthesis pathway. Plays a role in the modulation of circadian clock function. NAMPT-dependent oscillatory production of NAD regulates oscillation of clock target gene expression by releasing the core clock component: CLOCK-BMAL1 heterodimer from NAD-dependent SIRT1-mediated suppression. This Mus musculus (Mouse) protein is Nicotinamide phosphoribosyltransferase (Nampt).